The sequence spans 248 residues: Adenosylcobinamide-GDP ribazoletransferase (248 aa).

7 helical membrane-spanning segments follow: residues 24-44 (EINL…IGAW), 70-90 (IIIT…GLFS), 106-126 (VGAN…ALFL), 134-154 (IGWL…LLFA), 168-188 (IFLG…LVAL), 189-209 (GAFF…FTII), and 228-248 (AGGQ…WGLI).

This sequence belongs to the CobS family. It depends on Mg(2+) as a cofactor.

The protein resides in the cell membrane. It catalyses the reaction alpha-ribazole + adenosylcob(III)inamide-GDP = adenosylcob(III)alamin + GMP + H(+). The catalysed reaction is alpha-ribazole 5'-phosphate + adenosylcob(III)inamide-GDP = adenosylcob(III)alamin 5'-phosphate + GMP + H(+). It participates in cofactor biosynthesis; adenosylcobalamin biosynthesis; adenosylcobalamin from cob(II)yrinate a,c-diamide: step 7/7. Its function is as follows. Joins adenosylcobinamide-GDP and alpha-ribazole to generate adenosylcobalamin (Ado-cobalamin). Also synthesizes adenosylcobalamin 5'-phosphate from adenosylcobinamide-GDP and alpha-ribazole 5'-phosphate. This Listeria monocytogenes serotype 4a (strain HCC23) protein is Adenosylcobinamide-GDP ribazoletransferase.